We begin with the raw amino-acid sequence, 443 residues long: Thymidine phosphorylase (443 aa).

The protein belongs to the thymidine/pyrimidine-nucleoside phosphorylase family. Homodimer.

The catalysed reaction is thymidine + phosphate = 2-deoxy-alpha-D-ribose 1-phosphate + thymine. It functions in the pathway pyrimidine metabolism; dTMP biosynthesis via salvage pathway; dTMP from thymine: step 1/2. Its function is as follows. The enzymes which catalyze the reversible phosphorolysis of pyrimidine nucleosides are involved in the degradation of these compounds and in their utilization as carbon and energy sources, or in the rescue of pyrimidine bases for nucleotide synthesis. This is Thymidine phosphorylase from Shewanella baltica (strain OS223).